The chain runs to 310 residues: DDRGK domain-containing protein 1 (310 aa).

A helical transmembrane segment spans residues 1–21 (MAAIIYLAIAAVASILLFVAV). Topologically, residues 22–310 (KLLSTDTKTE…DSPAEISVNA (289 aa)) are cytoplasmic. 2 disordered regions span residues 38–85 (VGEL…DEYQ) and 110–162 (KAEK…LKEE). The span at 52-70 (PRARARRGLRNKTNRSKTQ) shows a compositional bias: basic residues. A compositionally biased stretch (acidic residues) spans 76-85 (DYDDYDDEYQ).

It belongs to the DDRGK1 family.

The protein localises to the endoplasmic reticulum membrane. Functionally, substrate adapter for ufmylation, the covalent attachment of the ubiquitin-like modifier UFM1 to substrate proteins. This Trichoplax adhaerens (Trichoplax reptans) protein is DDRGK domain-containing protein 1.